The chain runs to 369 residues: Homoserine O-succinyltransferase (369 aa).

Positions 49-328 constitute an AB hydrolase-1 domain; the sequence is NAVFICHALT…RFDSTQSARM (280 aa). Residue Ser154 is the Nucleophile of the active site. Arg224 provides a ligand contact to substrate. Residues Asp317 and His350 contribute to the active site. Asp351 contacts substrate.

This sequence belongs to the AB hydrolase superfamily. MetX family. Homodimer.

The protein resides in the cytoplasm. The catalysed reaction is L-homoserine + succinyl-CoA = O-succinyl-L-homoserine + CoA. It functions in the pathway amino-acid biosynthesis; L-methionine biosynthesis via de novo pathway; O-succinyl-L-homoserine from L-homoserine: step 1/1. Transfers a succinyl group from succinyl-CoA to L-homoserine, forming succinyl-L-homoserine. The protein is Homoserine O-succinyltransferase of Nocardioides sp. (strain ATCC BAA-499 / JS614).